The following is a 660-amino-acid chain: Methionine--tRNA ligase 1 (660 aa).

The short motif at 15-25 (YYPSGKLHIGH) is the 'HIGH' region element. Positions 310–314 (KMSKS) match the 'KMSKS' region motif. Lysine 313 provides a ligand contact to ATP. A tRNA-binding domain is found at 560 to 660 (DFFKVELRVA…QNIPNGTKIK (101 aa)).

It belongs to the class-I aminoacyl-tRNA synthetase family. MetG type 2B subfamily. In terms of assembly, homodimer.

The protein resides in the cytoplasm. It carries out the reaction tRNA(Met) + L-methionine + ATP = L-methionyl-tRNA(Met) + AMP + diphosphate. Is required not only for elongation of protein synthesis but also for the initiation of all mRNA translation through initiator tRNA(fMet) aminoacylation. The polypeptide is Methionine--tRNA ligase 1 (Bacillus anthracis).